Reading from the N-terminus, the 407-residue chain is MESRKDMVVFLDGGQLGTLVGKRVSNLSEAVGSPLPEPPEKMVPRGCLSPRAVPPATRERGGGGPEEEPVDGLAGSAAGPGAEPQVAGAAMLGPGPPAPSVDSLSGQGQPSSSDTESDFYEEIEVSCTPDCATGNAEYQHSKGSGSEALVGSPNGGSETPKSNGGSGGGGSQGTLACSASDQMRRYRTAFTREQIARLEKEFYRENYVSRPRRCELAAALNLPETTIKVWFQNRRMKDKRQRLAMTWPHPADPAFYTYMMSHAAAAGGLPYPFPSHLPLPYYSPVGLGAASAASAAASPFSGSLRPLDTFRVLSQPYPRPELLCAFRHPPLYPGPAHGLGASAGGPCSCLACHSGPANGLAPRAAAASDFTCASTSRSDSFLTFAPSVLSKASSVALDQREEVPLTR.

Disordered stretches follow at residues 29 to 120 (EAVG…SDFY) and 137 to 179 (EYQH…ACSA). Residues 102–114 (DSLSGQGQPSSSD) show a composition bias toward polar residues. The segment at residues 183–242 (MRRYRTAFTREQIARLEKEFYRENYVSRPRRCELAAALNLPETTIKVWFQNRRMKDKRQR) is a DNA-binding region (homeobox).

Belongs to the even-skipped homeobox family.

It is found in the nucleus. Functionally, may play a role in the specification of neuronal cell types. The polypeptide is Homeobox even-skipped homolog protein 1 (EVX1) (Homo sapiens (Human)).